Reading from the N-terminus, the 185-residue chain is MNISGTLNTLRLLYNPSLCKPSLVVPTFNDLPIPIHDSIKAVVLDKDNCIAFPHDDKIWPDYLQHWETLRSKYSNKALLIVSNTAGSNSDKDYSQAKLLEDKTGIPVLRHSTKKPGCHNEILDYFYRNKTITNPKEVAVVGDRLFTDILMANLMGSYGVWIRDGVKVSANPLSKFEKKLYNFLGF.

Residues 45-49 (DKDNC) carry the Phosphoryl acceptor motif.

The protein belongs to the GEP4 family.

The protein resides in the mitochondrion inner membrane. It carries out the reaction a 1,2-diacyl-sn-glycero-3-phospho-(1'-sn-glycero-3'-phosphate) + H2O = a 1,2-diacyl-sn-glycero-3-phospho-(1'-sn-glycerol) + phosphate. It participates in phospholipid metabolism; phosphatidylglycerol biosynthesis; phosphatidylglycerol from CDP-diacylglycerol: step 2/2. Its function is as follows. Phosphatidylglycerophosphatase involved in the biosynthesis of cardiolipin (CL), a unique dimeric phosphoglycerolipid predominantly present in mitochondrial membranes and which has important functions for cellular energy metabolism, mitochondrial dynamics and the initiation of apoptotic pathways. Required for the stability of respiratory chain supercomplexes and for growth at elevated temperature, in presence of ethidium bromide or in absence of prohibitins. The protein is Phosphatidylglycerophosphatase GEP4, mitochondrial (GEP4) of Saccharomyces cerevisiae (strain ATCC 204508 / S288c) (Baker's yeast).